A 233-amino-acid chain; its full sequence is Large ribosomal subunit protein uL3 (233 aa).

Positions 146-171 (GSQRASHGNSRSHRVPGSIGQAQDPG) are disordered. Q168 is subject to N5-methylglutamine.

It belongs to the universal ribosomal protein uL3 family. Part of the 50S ribosomal subunit. Forms a cluster with proteins L14 and L19. Methylated by PrmB.

Functionally, one of the primary rRNA binding proteins, it binds directly near the 3'-end of the 23S rRNA, where it nucleates assembly of the 50S subunit. The chain is Large ribosomal subunit protein uL3 from Bordetella bronchiseptica (strain ATCC BAA-588 / NCTC 13252 / RB50) (Alcaligenes bronchisepticus).